Here is a 286-residue protein sequence, read N- to C-terminus: uncharacterized protein (286 aa).

The Integrase catalytic domain occupies 1–146 (MSRYKKDNDG…KPVDVERGDF (146 aa)). Positions 252–263 (RKVKAKKGKKDK) are enriched in basic residues. The tract at residues 252–286 (RKVKAKKGKKDKKLKESKKSDDTSTGASTGSSIAM) is disordered. Residues 264–273 (KLKESKKSDD) show a composition bias toward basic and acidic residues. Over residues 274–286 (TSTGASTGSSIAM) the composition is skewed to low complexity.

This is an uncharacterized protein from Caenorhabditis elegans.